A 558-amino-acid chain; its full sequence is Formate--tetrahydrofolate ligase (558 aa).

Thr-67 to Thr-74 contributes to the ATP binding site.

Belongs to the formate--tetrahydrofolate ligase family.

It catalyses the reaction (6S)-5,6,7,8-tetrahydrofolate + formate + ATP = (6R)-10-formyltetrahydrofolate + ADP + phosphate. It functions in the pathway one-carbon metabolism; tetrahydrofolate interconversion. The sequence is that of Formate--tetrahydrofolate ligase from Ruegeria sp. (strain TM1040) (Silicibacter sp.).